Here is a 134-residue protein sequence, read N- to C-terminus: Large ribosomal subunit protein bL12 (134 aa).

Belongs to the bacterial ribosomal protein bL12 family. Homodimer. Part of the ribosomal stalk of the 50S ribosomal subunit. Forms a multimeric L10(L12)X complex, where L10 forms an elongated spine to which 2 to 4 L12 dimers bind in a sequential fashion. Binds GTP-bound translation factors.

In terms of biological role, forms part of the ribosomal stalk which helps the ribosome interact with GTP-bound translation factors. Is thus essential for accurate translation. This is Large ribosomal subunit protein bL12 from Chlamydia abortus (strain DSM 27085 / S26/3) (Chlamydophila abortus).